The following is a 198-amino-acid chain: Photosystem I assembly protein Ycf4 (198 aa).

Residues 1–20 (MTASTTINKGDSPNGDSSAS) form a disordered region. Helical transmembrane passes span 36–58 (YWWA…SSYL) and 78–100 (LVMG…VILW).

The protein belongs to the Ycf4 family.

It is found in the cellular thylakoid membrane. Functionally, seems to be required for the assembly of the photosystem I complex. This chain is Photosystem I assembly protein Ycf4, found in Nostoc sp. (strain PCC 7120 / SAG 25.82 / UTEX 2576).